A 227-amino-acid chain; its full sequence is MENLKKMAGITAAEFIKDGMVVGLGTGSTAYYFVEEIGRRIKEEGLQITAVTTSSVTSKQAEGLNIPLKSIDQVDFVDVTVDGADEVDSQFNGIKGGGGALLMEKVVATPSKEYIWVVDESKLVEKLGAFKLPVEVVQYGAEQVFRHFERAGYKPSFREKDGQRFVTDMQNFIIDLALDVIENPIAFGQELDHVVGVVEHGLFNQMVDKVIVAGRDGVQISTSKKGK.

Substrate is bound by residues 26–29 (TGST), 82–85 (DGAD), and 95–98 (KGGG). The Proton acceptor role is filled by Glu104. Lys122 is a binding site for substrate.

The protein belongs to the ribose 5-phosphate isomerase family. As to quaternary structure, homodimer.

It catalyses the reaction aldehydo-D-ribose 5-phosphate = D-ribulose 5-phosphate. It participates in carbohydrate degradation; pentose phosphate pathway; D-ribose 5-phosphate from D-ribulose 5-phosphate (non-oxidative stage): step 1/1. Functionally, catalyzes the reversible conversion of ribose-5-phosphate to ribulose 5-phosphate. This is Ribose-5-phosphate isomerase A from Streptococcus pneumoniae serotype 4 (strain ATCC BAA-334 / TIGR4).